Consider the following 280-residue polypeptide: Acetyl-coenzyme A carboxylase carboxyl transferase subunit beta (280 aa).

The region spanning 25–280 (VMRECPICHA…RLHTKENAYG (256 aa)) is the CoA carboxyltransferase N-terminal domain. Zn(2+)-binding residues include Cys-29, Cys-32, Cys-47, and Cys-50. The C4-type zinc finger occupies 29–50 (CPICHAKFLSMRLGRDHTCPKC).

This sequence belongs to the AccD/PCCB family. As to quaternary structure, acetyl-CoA carboxylase is a heterohexamer composed of biotin carboxyl carrier protein (AccB), biotin carboxylase (AccC) and two subunits each of ACCase subunit alpha (AccA) and ACCase subunit beta (AccD). The cofactor is Zn(2+).

It is found in the cytoplasm. It carries out the reaction N(6)-carboxybiotinyl-L-lysyl-[protein] + acetyl-CoA = N(6)-biotinyl-L-lysyl-[protein] + malonyl-CoA. It participates in lipid metabolism; malonyl-CoA biosynthesis; malonyl-CoA from acetyl-CoA: step 1/1. In terms of biological role, component of the acetyl coenzyme A carboxylase (ACC) complex. Biotin carboxylase (BC) catalyzes the carboxylation of biotin on its carrier protein (BCCP) and then the CO(2) group is transferred by the transcarboxylase to acetyl-CoA to form malonyl-CoA. The sequence is that of Acetyl-coenzyme A carboxylase carboxyl transferase subunit beta from Lactobacillus helveticus (strain DPC 4571).